The following is a 539-amino-acid chain: Glucose-6-phosphate isomerase (539 aa).

The Proton donor role is filled by glutamate 340. Catalysis depends on residues histidine 371 and lysine 500.

Belongs to the GPI family.

It is found in the cytoplasm. The catalysed reaction is alpha-D-glucose 6-phosphate = beta-D-fructose 6-phosphate. It participates in carbohydrate biosynthesis; gluconeogenesis. The protein operates within carbohydrate degradation; glycolysis; D-glyceraldehyde 3-phosphate and glycerone phosphate from D-glucose: step 2/4. Functionally, catalyzes the reversible isomerization of glucose-6-phosphate to fructose-6-phosphate. This chain is Glucose-6-phosphate isomerase, found in Ruegeria pomeroyi (strain ATCC 700808 / DSM 15171 / DSS-3) (Silicibacter pomeroyi).